Here is a 214-residue protein sequence, read N- to C-terminus: ATP phosphoribosyltransferase (214 aa).

The protein belongs to the ATP phosphoribosyltransferase family. Short subfamily. Heteromultimer composed of HisG and HisZ subunits.

The protein localises to the cytoplasm. It catalyses the reaction 1-(5-phospho-beta-D-ribosyl)-ATP + diphosphate = 5-phospho-alpha-D-ribose 1-diphosphate + ATP. The protein operates within amino-acid biosynthesis; L-histidine biosynthesis; L-histidine from 5-phospho-alpha-D-ribose 1-diphosphate: step 1/9. Functionally, catalyzes the condensation of ATP and 5-phosphoribose 1-diphosphate to form N'-(5'-phosphoribosyl)-ATP (PR-ATP). Has a crucial role in the pathway because the rate of histidine biosynthesis seems to be controlled primarily by regulation of HisG enzymatic activity. The protein is ATP phosphoribosyltransferase of Ruminiclostridium cellulolyticum (strain ATCC 35319 / DSM 5812 / JCM 6584 / H10) (Clostridium cellulolyticum).